Here is a 390-residue protein sequence, read N- to C-terminus: Cold-responsive protein kinase 1 (390 aa).

The Protein kinase domain maps to 41–320 (FSAENKIGEG…VRLLTGEKDI (280 aa)). ATP-binding positions include 47–55 (IGEGGFGSV) and K69. Y114 carries the phosphotyrosine modification. Catalysis depends on D169, which acts as the Proton acceptor. Phosphoserine is present on residues S173 and S202. Phosphothreonine is present on residues T203 and T208. Y216 is subject to Phosphotyrosine. The segment at 345–390 (TKTEQVNRQNYTNPSSSSNGSSRDHSNAYSSGASSANAGNTFSSTI) is disordered. Low complexity predominate over residues 354–390 (NYTNPSSSSNGSSRDHSNAYSSGASSANAGNTFSSTI).

This sequence belongs to the protein kinase superfamily. Ser/Thr protein kinase family. Interacts with and phosphorylates 14-3-3 proteins. Binds to GRF6 at the plasma membrane. In terms of processing, autophosphorylated.

The protein localises to the cell membrane. It catalyses the reaction L-seryl-[protein] + ATP = O-phospho-L-seryl-[protein] + ADP + H(+). The catalysed reaction is L-threonyl-[protein] + ATP = O-phospho-L-threonyl-[protein] + ADP + H(+). Activated by cold. Its function is as follows. Negative regulator of freezing tolerance that phosphorylates 14-3-3 proteins (e.g. GRF6) thus triggering their translocation from the cytosol to the nucleus in response to cold stress. This chain is Cold-responsive protein kinase 1, found in Arabidopsis thaliana (Mouse-ear cress).